The sequence spans 134 residues: Acyl carrier protein SF2, chloroplastic (134 aa).

The N-terminal 51 residues, 1–51 (MSTTFCSSVSMQATSLAATTRISFQKPALVSTTNLSFNLRRSIPTRFSISC), are a transit peptide targeting the chloroplast. The 76-residue stretch at 55–130 (PETVEKVSKI…EAAELIEELV (76 aa)) folds into the Carrier domain. The residue at position 90 (S90) is an O-(pantetheine 4'-phosphoryl)serine.

The protein belongs to the acyl carrier protein (ACP) family. In terms of processing, 4'-phosphopantetheine is transferred from CoA to a specific serine of apo-ACP by acpS. This modification is essential for activity because fatty acids are bound in thioester linkage to the sulfhydryl of the prosthetic group.

The protein localises to the plastid. Its subcellular location is the chloroplast. The protein operates within lipid metabolism; fatty acid biosynthesis. In terms of biological role, carrier of the growing fatty acid chain in fatty acid biosynthesis. This chain is Acyl carrier protein SF2, chloroplastic (Acl1.1), found in Brassica campestris (Field mustard).